The sequence spans 426 residues: Adenylosuccinate synthetase (426 aa).

GTP is bound by residues 18–24 (GDEGKGK) and 46–48 (GHT). Asp-19 acts as the Proton acceptor in catalysis. Asp-19 and Gly-46 together coordinate Mg(2+). IMP-binding positions include 19–22 (DEGK), 44–47 (NAGH), Thr-136, Arg-150, Gln-222, Thr-237, and Arg-301. Residue His-47 is the Proton donor of the active site. 297–303 (VTTKRKR) lines the substrate pocket. Residues Arg-303, 329-331 (KID), and 413-415 (GTG) each bind GTP.

This sequence belongs to the adenylosuccinate synthetase family. In terms of assembly, homodimer. The cofactor is Mg(2+).

Its subcellular location is the cytoplasm. It catalyses the reaction IMP + L-aspartate + GTP = N(6)-(1,2-dicarboxyethyl)-AMP + GDP + phosphate + 2 H(+). It functions in the pathway purine metabolism; AMP biosynthesis via de novo pathway; AMP from IMP: step 1/2. Its function is as follows. Plays an important role in the de novo pathway and in the salvage pathway of purine nucleotide biosynthesis. Catalyzes the first committed step in the biosynthesis of AMP from IMP. This Schistosoma mansoni (Blood fluke) protein is Adenylosuccinate synthetase.